The chain runs to 491 residues: Beta-galactosidase (491 aa).

Glu-209 acts as the Proton donor in catalysis. The active-site Nucleophile is the Glu-389.

The protein belongs to the glycosyl hydrolase 1 family.

The catalysed reaction is Hydrolysis of terminal non-reducing beta-D-galactose residues in beta-D-galactosides.. This chain is Beta-galactosidase (bgaS), found in Sulfolobus acidocaldarius (strain ATCC 33909 / DSM 639 / JCM 8929 / NBRC 15157 / NCIMB 11770).